Consider the following 242-residue polypeptide: DnaJ homolog subfamily B member 3 (242 aa).

One can recognise a J domain in the interval 1–69; sequence MVDYYEVLGV…RKREVYDRCG (69 aa).

As to expression, testis specific. Expression is confined to the germline without any contribution of the somatic components.

Functionally, may operate as a co-chaperone of the male germ cell- and haploid stage-specific Hsp70 proteins. In Mus musculus (Mouse), this protein is DnaJ homolog subfamily B member 3 (Dnajb3).